Here is a 1530-residue protein sequence, read N- to C-terminus: B-cell CLL/lymphoma 9-like protein (1530 aa).

Disordered regions lie at residues 1 to 101 (MHSE…VLEP), 155 to 187 (QGHSGSSTTGHVSDPGGPGLGSGHGPGIRTDLH), 246 to 353 (HISS…PSVL), 398 to 439 (SGTG…IGGG), 473 to 503 (QTQNLGGPGLDDSLMGPHHGMPPHSHHLSSP), 821 to 1076 (QNGR…QNPL), 1250 to 1279 (KGMSHQRPPHQPDSFPPMPMGDGPDLSEVI), and 1310 to 1331 (SETMSQPQQNPHQGQPPPQVSS). A compositionally biased stretch (polar residues) spans 8–18 (SNHGKQVTSGA). Positions 19–34 (QSQLPNVNQAQQQAPA) are enriched in low complexity. Basic and acidic residues predominate over residues 81-93 (ERSVSIDTGDQRE). Residues 156–165 (GHSGSSTTGH) show a composition bias toward low complexity. Residues 170–180 (GGPGLGSGHGP) show a composition bias toward gly residues. 2 stretches are compositionally biased toward polar residues: residues 247–264 (ISSSHSPPIGTPKSQSGT) and 278–287 (GTSTPSSTGH). 2 stretches are compositionally biased toward low complexity: residues 409-426 (GPNGNPNGTNVNNNNSND) and 485-503 (SLMGPHHGMPPHSHHLSSP). Composition is skewed to polar residues over residues 875–891 (LSSTSRLSHIPMNTGSR), 920–930 (QLKSPSLSQEP), and 944–953 (SPSQLPQSGP). Composition is skewed to low complexity over residues 960-971 (AASGAGTPSSTS), 979-994 (GPSLGLRSPSGSPGHL), and 1031-1060 (SSSTDTGMSLPPRSSNSTPISQPSNSINPS). Positions 1258–1268 (PHQPDSFPPMP) are enriched in pro residues.

It belongs to the BCL9 family.

The protein resides in the nucleus. In terms of biological role, transcriptional regulator that may act as an activator. Plays a role for mesoderm patterning in early embryogenesis. This Danio rerio (Zebrafish) protein is B-cell CLL/lymphoma 9-like protein (bcl9l).